The sequence spans 441 residues: ATP-dependent RNA helicase sub2 (441 aa).

Residues 19–29 (DAAATTAAPAA) are compositionally biased toward low complexity. The interval 19–43 (DAAATTAAPAANGAQDKKGDLTVSG) is disordered. Residues 58-86 (TGFRDFLLKGELLRAITDCGFEHPSEVQQ) carry the Q motif motif. Residues 89 to 264 (IPTAILNVDV…KKFMRNPLEV (176 aa)) enclose the Helicase ATP-binding domain. 102–109 (AKSGLGKT) serves as a coordination point for ATP. Residues 211-214 (DECD) carry the DEAD box motif. The Helicase C-terminal domain occupies 276–437 (GLQQYYIKLS…EYPEGGVDSS (162 aa)).

The protein belongs to the DEAD box helicase family. DECD subfamily.

It localises to the nucleus. It carries out the reaction ATP + H2O = ADP + phosphate + H(+). In terms of biological role, ATP-binding RNA helicase involved in transcription elongation and required for the export of mRNA out of the nucleus. SUB2 also plays a role in pre-mRNA splicing and spliceosome assembly. May be involved in rDNA and telomeric silencing, and maintenance of genome integrity. In Neosartorya fischeri (strain ATCC 1020 / DSM 3700 / CBS 544.65 / FGSC A1164 / JCM 1740 / NRRL 181 / WB 181) (Aspergillus fischerianus), this protein is ATP-dependent RNA helicase sub2 (sub2).